The following is a 441-amino-acid chain: RUN domain-containing protein 3A (441 aa).

Positions M1–A293 are interaction with RAP2A. The RUN domain maps to D52–E184. T210 is modified (phosphothreonine). The interval D211–P234 is disordered. Residue S227 is modified to Phosphoserine. Residues Y262–I317 are a coiled coil. The span at P367–Q379 shows a compositional bias: polar residues. Positions P367–T399 are disordered. Positions R380 to E389 are enriched in basic and acidic residues. S411 and S414 each carry phosphoserine.

The protein belongs to the RUNDC3 family. Interacts with the GTP-bound form of RAP2A.

May act as an effector of RAP2A in neuronal cells. This chain is RUN domain-containing protein 3A (RUNDC3A), found in Bos taurus (Bovine).